We begin with the raw amino-acid sequence, 728 residues long: Catalase-peroxidase 1 (728 aa).

A signal peptide spans 1–22; sequence MDKTQSSQGKCPVMHGANSAVA. Positions 97 to 225 form a cross-link, tryptophyl-tyrosyl-methioninium (Trp-Tyr) (with M-251); it reads WHSAGTYRVA…LAAVMMGLIY (129 aa). H98 serves as the catalytic Proton acceptor. Residues 225–251 constitute a cross-link (tryptophyl-tyrosyl-methioninium (Tyr-Met) (with W-97)); sequence YVNPEGVDGKPDPLRTAQDVRVTFARM. A heme b-binding site is contributed by H266.

This sequence belongs to the peroxidase family. Peroxidase/catalase subfamily. Homodimer or homotetramer. Requires heme b as cofactor. In terms of processing, formation of the three residue Trp-Tyr-Met cross-link is important for the catalase, but not the peroxidase activity of the enzyme.

It catalyses the reaction H2O2 + AH2 = A + 2 H2O. The enzyme catalyses 2 H2O2 = O2 + 2 H2O. Bifunctional enzyme with both catalase and broad-spectrum peroxidase activity. This is Catalase-peroxidase 1 from Shewanella sp. (strain MR-4).